The primary structure comprises 281 residues: 3'-5' exonuclease Snipper (281 aa).

The interval 19-52 is disordered; sequence DGARPDPNNDPEESFNEDEVTEANSVPAKSKKSR. Residues 27–39 show a composition bias toward acidic residues; that stretch reads NDPEESFNEDEVT. An Exonuclease domain is found at 64 to 262; it reads YVIAVDFEAT…MCKMVRDGAL (199 aa). The Mg(2+) site is built by aspartate 69 and glutamate 71. Glutamate 71 serves as the catalytic Proton acceptor. Glutamate 71 and alanine 72 together coordinate AMP. Aspartate 183 is a Mg(2+) binding site. Histidine 240 (proton acceptor) is an active-site residue. Histidine 240 contacts AMP. Aspartate 245 is a binding site for Mg(2+).

The protein belongs to the ERI2 family. Mg(2+) serves as cofactor.

It localises to the cytoplasm. Its subcellular location is the nucleus. The protein resides in the nucleolus. Functionally, a broad-specificity exonuclease, capable of degrading both structure-specific DNA and RNA targets without sequence specificity in vitro. Requires two to five unpaired nucleotides in the 3' region for efficient binding and nuclease activity. Binds with higher affinity to RNA and DNA stem-loop substrates compared to single-stranded substrate. Binds to the 3'-end of histone mRNAs and degrades them, suggesting that it might play a role in histone mRNA decay after replication. Can readily cleave the histone stem-loop RNA beyond the -12 (UUU) position in the loop to produce -14 and then -16 oligonucleotide fragments for both the stem-loop and the reverse stem-loop. Cleaves both the single-stranded 3' flank as well as the double-stranded stem portion of histone stem-loop RNA. Might affect histone mRNA 3' processing thereby regulating histone protein expression. Has an important role in development and tissue formation. Might have a role in 5.8S rRNA precursor processing. The chain is 3'-5' exonuclease Snipper from Drosophila melanogaster (Fruit fly).